Consider the following 94-residue polypeptide: Putative toxin RelE4 (94 aa).

It belongs to the RelE toxin family.

Functionally, toxic component of a type II toxin-antitoxin (TA) system. Its cognate antitoxin is RelB4 (Potential). This Methanocaldococcus jannaschii (strain ATCC 43067 / DSM 2661 / JAL-1 / JCM 10045 / NBRC 100440) (Methanococcus jannaschii) protein is Putative toxin RelE4 (relE4).